A 337-amino-acid polypeptide reads, in one-letter code: Cysteinyl leukotriene receptor 1 (337 aa).

Residues 1–28 are Extracellular-facing; it reads MDETGNLTVSSATCHDTIDDFRNQVYST. An N-linked (GlcNAc...) asparagine glycan is attached at Asn-6. Residues 29-49 traverse the membrane as a helical segment; the sequence is LYSMISVVGFFGNGFVLYVLI. Over 50–57 the chain is Cytoplasmic; that stretch reads KTYHKKSA. The chain crosses the membrane as a helical span at residues 58–78; that stretch reads FQVYMINLAVADLLCVCTLPL. Residues 79–106 lie on the Extracellular side of the membrane; that stretch reads RVVYYVHKGIWLFGDFLCRLSTYALYVN. A disulfide bridge links Cys-96 with Cys-173. The helical transmembrane segment at 107 to 127 threads the bilayer; it reads LYCSIFFMTAMSFFRCIAIVF. At 128-141 the chain is on the cytoplasmic side; sequence PVQNINLVTQKKAR. Residues 142 to 162 traverse the membrane as a helical segment; sequence FVCVGIWIFVILTSSPFLMAK. Over 163–193 the chain is Extracellular; sequence PQKDEKNNTKCFEPPQDNQTKNHVLVLHYVS. N-linked (GlcNAc...) asparagine glycans are attached at residues Asn-169 and Asn-180. Residues 194-214 traverse the membrane as a helical segment; it reads LFVGFIIPFVIIIVCYTMIIL. Topologically, residues 215-230 are cytoplasmic; sequence TLLKKSMKKNLSSHKK. The chain crosses the membrane as a helical span at residues 231-251; it reads AIGMIMVVTAAFLVSFMPYHI. Over 252-276 the chain is Extracellular; the sequence is QRTIHLHFLHNETKPCDSVLRMQKS. A glycan (N-linked (GlcNAc...) asparagine) is linked at Asn-262. A helical transmembrane segment spans residues 277–297; the sequence is VVITLSLAASNCCFDPLLYFF. Topologically, residues 298-337 are cytoplasmic; that stretch reads SGGNFRKRLSTFRKHSLSSVTYVPRKKASLPEKGEEICKV.

Belongs to the G-protein coupled receptor 1 family. As to expression, widely expressed, with highest levels in spleen and peripheral blood leukocytes. Lower expression in several tissues, such as lung (mostly in smooth muscle bundles and alveolar macrophages), placenta, small intestine, pancreas, colon and heart.

The protein localises to the cell membrane. Receptor for cysteinyl leukotrienes mediating bronchoconstriction of individuals with and without asthma. Stimulation by LTD4 results in the contraction and proliferation of smooth muscle, edema, eosinophil migration and damage to the mucus layer in the lung. This response is mediated via a G-protein that activates a phosphatidylinositol-calcium second messenger system. The rank order of affinities for the leukotrienes is LTD4 &gt;&gt; LTE4 = LTC4 &gt;&gt; LTB4. The protein is Cysteinyl leukotriene receptor 1 (CYSLTR1) of Homo sapiens (Human).